The sequence spans 300 residues: N-carbamoylputrescine amidase (300 aa).

The region spanning 8 to 266 is the CN hydrolase domain; the sequence is VTVAALQFAC…EAVLVAQFDL (259 aa). The Proton acceptor role is filled by Glu47. Lys120 functions as the Proton donor in the catalytic mechanism. Cys157 serves as the catalytic Nucleophile.

It belongs to the carbon-nitrogen hydrolase superfamily. Homooctamer.

It carries out the reaction N-carbamoylputrescine + H2O + 2 H(+) = putrescine + NH4(+) + CO2. It participates in amine and polyamine biosynthesis; putrescine biosynthesis via agmatine pathway; putrescine from N-carbamoylputrescine (amidase route): step 1/1. Its function is as follows. Involved in polyamine biosynthesis. The sequence is that of N-carbamoylputrescine amidase (CPA) from Solanum tuberosum (Potato).